Consider the following 339-residue polypeptide: Anthranilate phosphoribosyltransferase (339 aa).

Residues glycine 79, 82-83, serine 87, 89-92, 107-115, and serine 119 contribute to the 5-phospho-alpha-D-ribose 1-diphosphate site; these read GD, NIST, and KHGNRSVSS. Position 79 (glycine 79) interacts with anthranilate. Serine 91 is a Mg(2+) binding site. Residue asparagine 110 participates in anthranilate binding. Residue arginine 165 coordinates anthranilate. Mg(2+) is bound by residues aspartate 224 and glutamate 225.

The protein belongs to the anthranilate phosphoribosyltransferase family. In terms of assembly, homodimer. It depends on Mg(2+) as a cofactor.

The enzyme catalyses N-(5-phospho-beta-D-ribosyl)anthranilate + diphosphate = 5-phospho-alpha-D-ribose 1-diphosphate + anthranilate. The protein operates within amino-acid biosynthesis; L-tryptophan biosynthesis; L-tryptophan from chorismate: step 2/5. Catalyzes the transfer of the phosphoribosyl group of 5-phosphorylribose-1-pyrophosphate (PRPP) to anthranilate to yield N-(5'-phosphoribosyl)-anthranilate (PRA). The protein is Anthranilate phosphoribosyltransferase of Exiguobacterium sibiricum (strain DSM 17290 / CCUG 55495 / CIP 109462 / JCM 13490 / 255-15).